Reading from the N-terminus, the 332-residue chain is mRNA-decapping enzyme 1 (332 aa).

The span at 141 to 173 (ARAAKAASEAPQASVPAPTQAPAAPAQAPQMAP) shows a compositional bias: low complexity. The tract at residues 141–175 (ARAAKAASEAPQASVPAPTQAPAAPAQAPQMAPQA) is disordered.

It belongs to the DCP1 family. In terms of assembly, may be a component of the decapping complex composed of dcap-1 and dcap-2. Expressed in neurons including touch receptor neurons and motor neurons.

The protein resides in the cytoplasm. It localises to the cytoplasmic granule. In terms of biological role, component of the decapping complex necessary for the degradation of mRNAs, both in normal mRNA turnover and in nonsense-mediated mRNA decay. In contrast to orthologs, does not possess decapping activity and does not remove the 7-methyl guanine cap structure from mRNA molecules. In the nervous system, negatively regulates the expression of insulin-like peptide ins-7, which in turn promotes longevity. This may in part be through promoting the activity of daf-16 in distal tissues. Required for the developmental axon guidance and regrowth of PLM touch receptor neurons. In ADL sensory neurons, plays a role in ciliary shape formation. Acts in neurons to promote larval survival at high temperatures by negatively regulating lin-14 expression. In Caenorhabditis elegans, this protein is mRNA-decapping enzyme 1.